A 549-amino-acid polypeptide reads, in one-letter code: Arginine--tRNA ligase (549 aa).

The 'HIGH' region motif lies at 122 to 132 (ANPTGFLHLGH).

The protein belongs to the class-I aminoacyl-tRNA synthetase family. As to quaternary structure, monomer.

Its subcellular location is the cytoplasm. The enzyme catalyses tRNA(Arg) + L-arginine + ATP = L-arginyl-tRNA(Arg) + AMP + diphosphate. This Mycoplasmoides gallisepticum (strain R(low / passage 15 / clone 2)) (Mycoplasma gallisepticum) protein is Arginine--tRNA ligase.